A 142-amino-acid polypeptide reads, in one-letter code: Large ribosomal subunit protein uL11 (142 aa).

Belongs to the universal ribosomal protein uL11 family. In terms of assembly, part of the ribosomal stalk of the 50S ribosomal subunit. Interacts with L10 and the large rRNA to form the base of the stalk. L10 forms an elongated spine to which L12 dimers bind in a sequential fashion forming a multimeric L10(L12)X complex. One or more lysine residues are methylated.

Its function is as follows. Forms part of the ribosomal stalk which helps the ribosome interact with GTP-bound translation factors. The chain is Large ribosomal subunit protein uL11 from Shewanella pealeana (strain ATCC 700345 / ANG-SQ1).